The sequence spans 490 residues: Proline--tRNA ligase (490 aa).

It belongs to the class-II aminoacyl-tRNA synthetase family. ProS type 3 subfamily. In terms of assembly, homodimer.

It is found in the cytoplasm. The catalysed reaction is tRNA(Pro) + L-proline + ATP = L-prolyl-tRNA(Pro) + AMP + diphosphate. Functionally, catalyzes the attachment of proline to tRNA(Pro) in a two-step reaction: proline is first activated by ATP to form Pro-AMP and then transferred to the acceptor end of tRNA(Pro). The chain is Proline--tRNA ligase from Salinibacter ruber (strain DSM 13855 / M31).